The sequence spans 32 residues: U5-ctenitoxin-Pn1a (32 aa).

3 cysteine pairs are disulfide-bonded: cysteine 3–cysteine 16, cysteine 9–cysteine 21, and cysteine 15–cysteine 30.

As to expression, expressed by the venom gland.

It localises to the secreted. Functionally, blocks voltage-gated sodium channels (Nav). Causes tail erection, scratching and a reduction in mobility at a dose level of 1.40 mg/mouse. This Phoneutria nigriventer (Brazilian armed spider) protein is U5-ctenitoxin-Pn1a.